Here is a 394-residue protein sequence, read N- to C-terminus: Carbamoyltransferase HypF homolog (394 aa).

It belongs to the carbamoyltransferase HypF family.

The sequence is that of Carbamoyltransferase HypF homolog (hypF1) from Cupriavidus necator (strain ATCC 17699 / DSM 428 / KCTC 22496 / NCIMB 10442 / H16 / Stanier 337) (Ralstonia eutropha).